Here is a 158-residue protein sequence, read N- to C-terminus: Large ribosomal subunit protein uL11 (158 aa).

The tract at residues 1–21 (MAQSVKTMVEGGKATTGPPIG) is disordered.

This sequence belongs to the universal ribosomal protein uL11 family. In terms of assembly, part of the ribosomal stalk of the 50S ribosomal subunit. Interacts with L10 and the large rRNA to form the base of the stalk. L10 forms an elongated spine to which L12 dimers bind in a sequential fashion forming a multimeric L10(L12)X complex.

Forms part of the ribosomal stalk which helps the ribosome interact with GTP-bound translation factors. This Thermoplasma volcanium (strain ATCC 51530 / DSM 4299 / JCM 9571 / NBRC 15438 / GSS1) protein is Large ribosomal subunit protein uL11.